The sequence spans 158 residues: SsrA-binding protein (158 aa).

Positions 133–147 (KRQALRERQDNREAQ) are enriched in basic and acidic residues. The segment at 133 to 158 (KRQALRERQDNREAQRAMASRKHLGE) is disordered.

This sequence belongs to the SmpB family.

The protein resides in the cytoplasm. Its function is as follows. Required for rescue of stalled ribosomes mediated by trans-translation. Binds to transfer-messenger RNA (tmRNA), required for stable association of tmRNA with ribosomes. tmRNA and SmpB together mimic tRNA shape, replacing the anticodon stem-loop with SmpB. tmRNA is encoded by the ssrA gene; the 2 termini fold to resemble tRNA(Ala) and it encodes a 'tag peptide', a short internal open reading frame. During trans-translation Ala-aminoacylated tmRNA acts like a tRNA, entering the A-site of stalled ribosomes, displacing the stalled mRNA. The ribosome then switches to translate the ORF on the tmRNA; the nascent peptide is terminated with the 'tag peptide' encoded by the tmRNA and targeted for degradation. The ribosome is freed to recommence translation, which seems to be the essential function of trans-translation. The sequence is that of SsrA-binding protein from Leifsonia xyli subsp. xyli (strain CTCB07).